The chain runs to 201 residues: Probable chemoreceptor glutamine deamidase CheD 2 (201 aa).

Belongs to the CheD family.

The catalysed reaction is L-glutaminyl-[protein] + H2O = L-glutamyl-[protein] + NH4(+). Probably deamidates glutamine residues to glutamate on methyl-accepting chemotaxis receptors (MCPs), playing an important role in chemotaxis. The chain is Probable chemoreceptor glutamine deamidase CheD 2 from Chromobacterium violaceum (strain ATCC 12472 / DSM 30191 / JCM 1249 / CCUG 213 / NBRC 12614 / NCIMB 9131 / NCTC 9757 / MK).